A 722-amino-acid polypeptide reads, in one-letter code: Dual specificity tyrosine-phosphorylation-regulated kinase 2 (722 aa).

Ser25 is subject to Phosphoserine. The interval Thr54–Met127 is disordered. Positions Gly66–Gly119 are enriched in low complexity. The Protein kinase domain occupies Tyr198 to Leu494. ATP-binding positions include Ile204–Val212 and Lys227. Catalysis depends on Asp324, which acts as the Proton acceptor. Phosphotyrosine; by autocatalysis is present on residues Tyr356 and Tyr358. Disordered regions lie at residues Leu494–Val519, Thr557–Lys582, Gly624–Thr643, and Thr679–Ala722. Residues Arg506 to Val519 show a composition bias toward low complexity. The segment covering Thr557–Gly576 has biased composition (polar residues). Low complexity-rich tracts occupy residues Gly626–Ala635 and Gly689–Ser707.

This sequence belongs to the protein kinase superfamily. CMGC Ser/Thr protein kinase family. MNB/DYRK subfamily. Requires Mg(2+) as cofactor. In terms of processing, phosphorylated on serine/threonine residues.

It is found in the cytoplasm. The catalysed reaction is L-seryl-[protein] + ATP = O-phospho-L-seryl-[protein] + ADP + H(+). It carries out the reaction L-threonyl-[protein] + ATP = O-phospho-L-threonyl-[protein] + ADP + H(+). The enzyme catalyses L-tyrosyl-[protein] + ATP = O-phospho-L-tyrosyl-[protein] + ADP + H(+). With respect to regulation, autophosphorylates on Tyr-356 and Tyr-358. In vitro; can phosphorylate exogenous substrates on Ser and Thr residues. May have a physiological role in development being involved in cellular growth and differentiation. The protein is Dual specificity tyrosine-phosphorylation-regulated kinase 2 of Drosophila melanogaster (Fruit fly).